We begin with the raw amino-acid sequence, 472 residues long: Methanethiol oxidase (472 aa).

It belongs to the selenium-binding protein family.

The protein resides in the nucleus. It is found in the cytoplasm. It localises to the cytosol. The protein localises to the membrane. The enzyme catalyses methanethiol + O2 + H2O = hydrogen sulfide + formaldehyde + H2O2 + H(+). Its pathway is organosulfur degradation. Functionally, catalyzes the oxidation of methanethiol, an organosulfur compound known to be produced in substantial amounts by gut bacteria. Selenium-binding protein which may be involved in the sensing of reactive xenobiotics in the cytoplasm. May be involved in intra-Golgi protein transport. The polypeptide is Methanethiol oxidase (selenbp1-a) (Xenopus laevis (African clawed frog)).